Here is a 421-residue protein sequence, read N- to C-terminus: Imidazolonepropionase (421 aa).

Fe(3+)-binding residues include histidine 81 and histidine 83. Residues histidine 81 and histidine 83 each coordinate Zn(2+). Residues arginine 90, tyrosine 153, and histidine 186 each contribute to the 4-imidazolone-5-propanoate site. Residue tyrosine 153 coordinates N-formimidoyl-L-glutamate. Position 251 (histidine 251) interacts with Fe(3+). Residue histidine 251 participates in Zn(2+) binding. Glutamate 254 is a binding site for 4-imidazolone-5-propanoate. Aspartate 326 lines the Fe(3+) pocket. Aspartate 326 serves as a coordination point for Zn(2+). N-formimidoyl-L-glutamate-binding residues include asparagine 328 and glycine 330. Position 331 (serine 331) interacts with 4-imidazolone-5-propanoate.

Belongs to the metallo-dependent hydrolases superfamily. HutI family. Requires Zn(2+) as cofactor. It depends on Fe(3+) as a cofactor.

Its subcellular location is the cytoplasm. The catalysed reaction is 4-imidazolone-5-propanoate + H2O = N-formimidoyl-L-glutamate. It participates in amino-acid degradation; L-histidine degradation into L-glutamate; N-formimidoyl-L-glutamate from L-histidine: step 3/3. Functionally, catalyzes the hydrolytic cleavage of the carbon-nitrogen bond in imidazolone-5-propanoate to yield N-formimidoyl-L-glutamate. It is the third step in the universal histidine degradation pathway. The sequence is that of Imidazolonepropionase from Streptococcus pyogenes serotype M1.